The sequence spans 232 residues: Uracil-DNA glycosylase (232 aa).

Aspartate 64 (proton acceptor) is an active-site residue.

The protein belongs to the uracil-DNA glycosylase (UDG) superfamily. UNG family.

It localises to the cytoplasm. It catalyses the reaction Hydrolyzes single-stranded DNA or mismatched double-stranded DNA and polynucleotides, releasing free uracil.. In terms of biological role, excises uracil residues from the DNA which can arise as a result of misincorporation of dUMP residues by DNA polymerase or due to deamination of cytosine. This Shouchella clausii (strain KSM-K16) (Alkalihalobacillus clausii) protein is Uracil-DNA glycosylase.